The primary structure comprises 320 residues: Protein MRH1 (320 aa).

Topologically, residues 1-34 are extracellular; sequence MSTFETLIKRGGNEAIKINPPTGADFHITSRGSD. The chain crosses the membrane as a helical span at residues 35–55; that stretch reads WFWTCFCCYLLFGLILTFLMF. Over 56–62 the chain is Cytoplasmic; it reads RKPVNDR. Residues 63–83 traverse the membrane as a helical segment; sequence FFYLTGIAPNFFMCIAYFTMA. Over 84–116 the chain is Extracellular; sequence SNLGWIPVKAKYNHVQTSTQKEHPGYRQIFYSR. Residues 117 to 137 traverse the membrane as a helical segment; sequence FVGWFLALPWPIIQICMLAGT. Topologically, residues 138–141 are cytoplasmic; that stretch reads PFWQ. A helical transmembrane segment spans residues 142–162; that stretch reads MAFNVCITEFFTVCWLIAACV. Residues 163 to 167 lie on the Extracellular side of the membrane; that stretch reads HSTYK. A helical membrane pass occupies residues 168–188; that stretch reads WGYYTIGLGAAIVVSISVMTT. The Cytoplasmic portion of the chain corresponds to 189–204; it reads SYNLVKQRDNDIRLTF. A helical transmembrane segment spans residues 205–225; sequence LVFFSIIMFLWIIAYPTCFGI. Residues 226-238 are Extracellular-facing; that stretch reads TDGGNVLQPDSAG. A helical transmembrane segment spans residues 239-259; it reads IFYGIIDLILMCFIPTLLVPI. The Cytoplasmic segment spans residues 260–320; it reads ANHFGADKLG…KSKKSKKSEE (61 aa). The segment at 285–320 is disordered; it reads APVASPRPAATPNLSKDKKKKSKKSKKSKKSKKSEE. The residue at position 289 (serine 289) is a Phosphoserine. A Phosphothreonine modification is found at threonine 295. A Phosphoserine modification is found at serine 299. Positions 301–320 are enriched in basic residues; the sequence is DKKKKSKKSKKSKKSKKSEE.

Belongs to the archaeal/bacterial/fungal opsin family.

It localises to the cell membrane. The protein localises to the mitochondrion. It is found in the bud. The polypeptide is Protein MRH1 (MRH1) (Saccharomyces cerevisiae (strain ATCC 204508 / S288c) (Baker's yeast)).